The primary structure comprises 346 residues: Galanin receptor type 1 (346 aa).

Topologically, residues 1-33 (MELAPVNLSEGNGSDPEPPAEPRPLFGIGVENF) are extracellular. N-linked (GlcNAc...) asparagine glycans are attached at residues asparagine 7 and asparagine 12. A helical membrane pass occupies residues 34-54 (ITLVVFGLIFAMGVLGNSLVI). The Cytoplasmic portion of the chain corresponds to 55–69 (TVLARSKPGKPRSTT). The helical transmembrane segment at 70–90 (NLFILNLSIADLAYLLFCIPF) threads the bilayer. Residues 91–108 (QATVYALPTWVLGAFICK) are Extracellular-facing. An intrachain disulfide couples cysteine 107 to cysteine 185. A helical transmembrane segment spans residues 109–130 (FIHYFFTVSMLVSIFTLAAMSV). Topologically, residues 131–150 (DRYVAIVHSRRSSSLRVSRN) are cytoplasmic. A helical transmembrane segment spans residues 151–171 (ALLGVGFIWALSIAMASPVAY). Residues 172–196 (YQRLFHRDSNQTFCWEHWPNQLHKK) lie on the Extracellular side of the membrane. Residue asparagine 181 is glycosylated (N-linked (GlcNAc...) asparagine). The chain crosses the membrane as a helical span at residues 197-217 (AYVVCTFVFGYLLPLLLICFC). Over 218 to 246 (YAKVLNHLHKKLKNMSKKSEASKKKTAQT) the chain is Cytoplasmic. The chain crosses the membrane as a helical span at residues 247-267 (VLVVVVVFGISWLPHHVIHLW). Residues 268-269 (AE) lie on the Extracellular side of the membrane. Residues 270-290 (FGAFPLTPASFFFRITAHCLA) traverse the membrane as a helical segment. Topologically, residues 291-346 (YSNSSVNPIIYAFLSENFRKAYKQVFKCRVCNESPHGDAKEKNRIDTPPSTNCTHV) are cytoplasmic. Cysteine 318 carries S-palmitoyl cysteine lipidation. Basic and acidic residues predominate over residues 326–335 (HGDAKEKNRI). The disordered stretch occupies residues 326–346 (HGDAKEKNRIDTPPSTNCTHV).

It belongs to the G-protein coupled receptor 1 family. In terms of assembly, interacts with GRP39 AND HTR1A. Three cysteine residues are found in the C-terminus, at least one of which may be palmitoylated. As to expression, spinal cord, small intestine, Rin14B insulinoma cells and several brain regions, particularly ventral hippocampus, amygdala, supraoptic nucleus, hypothalamus, thalamus, lateral parabrachial nucleus and locus coeruleus.

It localises to the cell membrane. Receptor for the hormone galanin. The activity of this receptor is mediated by G proteins that inhibit adenylate cyclase activity. This Rattus norvegicus (Rat) protein is Galanin receptor type 1 (Galr1).